Consider the following 133-residue polypeptide: Norrin (133 aa).

The first 24 residues, 1–24 (MRKHVLAASFSMLSLLVIMGDTDS), serve as a signal peptide directing secretion. 4 cysteine pairs are disulfide-bonded: C39-C96, C55-C110, C65-C126, and C69-C128. Positions 39–132 (CMRHHYVDSI…ILSCHCEECN (94 aa)) constitute a CTCK domain.

In terms of assembly, homodimer; disulfide-linked. Component of a complex, at least composed of TSPAN12, FZD4, LRP5/6 and norrin (NDP). Binds FZD4 with high affinity. Interacts with LRP6 (via Beta-propellers 1 and 2). As to expression, expressed in the outer nuclear, inner nuclear and ganglion cell layers of the retina, and in fetal and adult brain.

It is found in the secreted. Its function is as follows. Activates the canonical Wnt signaling pathway through FZD4 and LRP5 coreceptor. Plays a central role in retinal vascularization by acting as a ligand for FZD4 that signals via stabilizing beta-catenin (CTNNB1) and activating LEF/TCF-mediated transcriptional programs. Acts in concert with TSPAN12 to activate FZD4 independently of the Wnt-dependent activation of FZD4, suggesting the existence of a Wnt-independent signaling that also promote accumulation the beta-catenin (CTNNB1). May be involved in a pathway that regulates neural cell differentiation and proliferation. Possible role in neuroectodermal cell-cell interaction. In Homo sapiens (Human), this protein is Norrin (NDP).